Reading from the N-terminus, the 530-residue chain is Membrane-associated transporter protein (530 aa).

Residues Met-1 to Glu-46 lie on the Cytoplasmic side of the membrane. The chain crosses the membrane as a helical span at residues Phe-47 to Ser-67. Residue Ser-68 is a topological domain, extracellular. The helical transmembrane segment at Leu-69–Gly-89 threads the bilayer. The Cytoplasmic segment spans residues Ser-90–Gly-110. Residues Val-111 to Ile-131 form a helical membrane-spanning segment. The Extracellular portion of the chain corresponds to Ala-132 to Leu-138. A helical membrane pass occupies residues Val-139–Ile-159. Topologically, residues Asp-160 to Ala-184 are cytoplasmic. Residues Leu-185 to Leu-205 form a helical membrane-spanning segment. Residues Glu-206 to Gln-216 lie on the Extracellular side of the membrane. The chain crosses the membrane as a helical span at residues Val-217–Ile-237. At Ser-238–Arg-318 the chain is on the cytoplasmic side. A helical transmembrane segment spans residues Tyr-319–Thr-339. The Extracellular portion of the chain corresponds to Asp-340–Gly-366. The N-linked (GlcNAc...) asparagine glycan is linked to Asn-356. Residues Val-367–Phe-387 form a helical membrane-spanning segment. The Cytoplasmic segment spans residues Gln-388–Lys-398. A helical membrane pass occupies residues Gly-399–Pro-419. At Asn-420–Leu-425 the chain is on the extracellular side. The chain crosses the membrane as a helical span at residues Val-426–Ile-446. Topologically, residues Thr-447 to Ala-477 are cytoplasmic. The chain crosses the membrane as a helical span at residues Thr-478–Val-498. Residues Asn-499–Val-504 are Extracellular-facing. A helical membrane pass occupies residues Val-505–Phe-525. The Cytoplasmic portion of the chain corresponds to Val-526–Asp-530.

Belongs to the glycoside-pentoside-hexuronide (GPH) cation symporter transporter (TC 2.A.2) family. Interacts with TYRP1. In terms of tissue distribution, expressed in mature melanocytes.

Its subcellular location is the melanosome membrane. The catalysed reaction is sucrose(out) + H(+)(out) = sucrose(in) + H(+)(in). The enzyme catalyses D-glucose(out) + H(+)(out) = D-glucose(in) + H(+)(in). Functionally, proton-associated glucose and sucrose transporter. May be able to transport also fructose. Expressed at a late melanosome maturation stage where functions as proton/glucose exporter which increase lumenal pH by decreasing glycolysis. Regulates melanogenesis by maintaining melanosome neutralization that is initially initiated by transient OCA2 and required for a proper function of the tyrosinase TYR. This chain is Membrane-associated transporter protein, found in Homo sapiens (Human).